The chain runs to 122 residues: Large ribosomal subunit protein uL29A (122 aa).

Residues 10-69 adopt a coiled-coil conformation; sequence QLGIKQIEERAAEIKADLAALRQKKNSGDVGANDIKTAKKNLARALTVRREKILEELVEA.

It belongs to the universal ribosomal protein uL29 family. In terms of assembly, component of the large ribosomal subunit.

The protein localises to the cytoplasm. This Encephalitozoon cuniculi (strain GB-M1) (Microsporidian parasite) protein is Large ribosomal subunit protein uL29A (RPL35A).